The primary structure comprises 217 residues: Adapter protein MecA (217 aa).

The protein belongs to the MecA family. In terms of assembly, homodimer.

In terms of biological role, enables the recognition and targeting of unfolded and aggregated proteins to the ClpC protease or to other proteins involved in proteolysis. This is Adapter protein MecA from Listeria welshimeri serovar 6b (strain ATCC 35897 / DSM 20650 / CCUG 15529 / CIP 8149 / NCTC 11857 / SLCC 5334 / V8).